A 488-amino-acid chain; its full sequence is UDP-N-acetylmuramate--L-alanine ligase (488 aa).

Residue 122-128 coordinates ATP; it reads GTHGKTT.

It belongs to the MurCDEF family.

It is found in the cytoplasm. It catalyses the reaction UDP-N-acetyl-alpha-D-muramate + L-alanine + ATP = UDP-N-acetyl-alpha-D-muramoyl-L-alanine + ADP + phosphate + H(+). It functions in the pathway cell wall biogenesis; peptidoglycan biosynthesis. Functionally, cell wall formation. This Mycobacterium marinum (strain ATCC BAA-535 / M) protein is UDP-N-acetylmuramate--L-alanine ligase.